The sequence spans 285 residues: Bifunctional protein FolD (285 aa).

NADP(+) is bound by residues 165–167, T192, and V233; that span reads GRG.

The protein belongs to the tetrahydrofolate dehydrogenase/cyclohydrolase family. In terms of assembly, homodimer.

It carries out the reaction (6R)-5,10-methylene-5,6,7,8-tetrahydrofolate + NADP(+) = (6R)-5,10-methenyltetrahydrofolate + NADPH. The catalysed reaction is (6R)-5,10-methenyltetrahydrofolate + H2O = (6R)-10-formyltetrahydrofolate + H(+). It participates in one-carbon metabolism; tetrahydrofolate interconversion. Functionally, catalyzes the oxidation of 5,10-methylenetetrahydrofolate to 5,10-methenyltetrahydrofolate and then the hydrolysis of 5,10-methenyltetrahydrofolate to 10-formyltetrahydrofolate. The sequence is that of Bifunctional protein FolD from Mycobacterium sp. (strain MCS).